The primary structure comprises 368 residues: 1-deoxy-D-xylulose 5-phosphate reductoisomerase (368 aa).

NADPH-binding residues include Thr7, Gly8, Ser9, Ile10, Gly31, Lys32, Asn33, and Asn113. Lys114 is a binding site for 1-deoxy-D-xylulose 5-phosphate. NADPH is bound at residue Glu115. Asp133 lines the Mn(2+) pocket. 1-deoxy-D-xylulose 5-phosphate-binding residues include Ser134, Glu135, Ser158, and His181. Mn(2+) is bound at residue Glu135. Gly187 serves as a coordination point for NADPH. The 1-deoxy-D-xylulose 5-phosphate site is built by Ser194, Asn199, Lys200, and Glu203. Residue Glu203 coordinates Mn(2+).

Belongs to the DXR family. The cofactor is Mg(2+). It depends on Mn(2+) as a cofactor.

It carries out the reaction 2-C-methyl-D-erythritol 4-phosphate + NADP(+) = 1-deoxy-D-xylulose 5-phosphate + NADPH + H(+). It participates in isoprenoid biosynthesis; isopentenyl diphosphate biosynthesis via DXP pathway; isopentenyl diphosphate from 1-deoxy-D-xylulose 5-phosphate: step 1/6. Functionally, catalyzes the NADPH-dependent rearrangement and reduction of 1-deoxy-D-xylulose-5-phosphate (DXP) to 2-C-methyl-D-erythritol 4-phosphate (MEP). This is 1-deoxy-D-xylulose 5-phosphate reductoisomerase from Helicobacter pylori (strain J99 / ATCC 700824) (Campylobacter pylori J99).